A 204-amino-acid chain; its full sequence is Thymidine kinase (204 aa).

Residues 23-30 and 95-98 each bind ATP; these read GSMFSGKT and DEAQ. E96 functions as the Proton acceptor in the catalytic mechanism. The Zn(2+) site is built by C152, C155, C184, and C187.

This sequence belongs to the thymidine kinase family. Homotetramer.

Its subcellular location is the cytoplasm. It carries out the reaction thymidine + ATP = dTMP + ADP + H(+). The protein is Thymidine kinase of Porphyromonas gingivalis (strain ATCC 33277 / DSM 20709 / CIP 103683 / JCM 12257 / NCTC 11834 / 2561).